The primary structure comprises 602 residues: RecBCD enzyme subunit RecD (602 aa).

171–178 (GGPGTGKT) contributes to the ATP binding site.

Belongs to the RecD family. In terms of assembly, heterotrimer of RecB, RecC and RecD. All subunits contribute to DNA-binding.

It catalyses the reaction Couples ATP hydrolysis with the unwinding of duplex DNA at the replication fork by translocating in the 5'-3' direction. This creates two antiparallel DNA single strands (ssDNA). The leading ssDNA polymer is the template for DNA polymerase III holoenzyme which synthesizes a continuous strand.. The catalysed reaction is ATP + H2O = ADP + phosphate + H(+). A helicase/nuclease that prepares dsDNA breaks (DSB) for recombinational DNA repair. Binds to DSBs and unwinds DNA via a highly rapid and processive ATP-dependent bidirectional helicase activity. Unwinds dsDNA until it encounters a Chi (crossover hotspot instigator) sequence from the 3' direction. Cuts ssDNA a few nucleotides 3' to the Chi site. The properties and activities of the enzyme are changed at Chi. The Chi-altered holoenzyme produces a long 3'-ssDNA overhang and facilitates RecA-binding to the ssDNA for homologous DNA recombination and repair. Holoenzyme degrades any linearized DNA that is unable to undergo homologous recombination. In the holoenzyme this subunit has ssDNA-dependent ATPase and 5'-3' helicase activity. When added to pre-assembled RecBC greatly stimulates nuclease activity and augments holoenzyme processivity. Negatively regulates the RecA-loading ability of RecBCD. The protein is RecBCD enzyme subunit RecD of Buchnera aphidicola subsp. Acyrthosiphon pisum (strain APS) (Acyrthosiphon pisum symbiotic bacterium).